A 377-amino-acid chain; its full sequence is MSNGIVIIGSGFAARQLVKNIRKQDASIPLTLIAADSMDEYNKPDLSHVISQGQRADDLTRQTAGEFAEQFNLRLFPHTWVTDIDAEAHVVKSQNNQWQYDKLVLATGASAFVPPVPGRELMLTLNSQQEYRACETQLRDARRVLIVGGGLIGSELAMDFCRAGKMVTLIDNAASILASLMPPEVSSRLQHRLTEMGVHLLLKSQLQGLEKTNSGILATLDRQRSIEVDTVIAATGLRPETALARRAGLTINRGVCVDSYLQTSNADIYALGDCAEINGQVLPFLQPIQLSAMVLAKNLLGNNTPLKLPAMLVKIKTPELPLHLAGETQRQDLRWQINTERQGMVARGVDDADQLRAFVVSEDRMKEAFGLLKTLSM.

The protein belongs to the FAD-dependent oxidoreductase family. The cofactor is FAD.

The protein localises to the cytoplasm. The enzyme catalyses 2 reduced [nitric oxide reductase rubredoxin domain] + NAD(+) + H(+) = 2 oxidized [nitric oxide reductase rubredoxin domain] + NADH. Its pathway is nitrogen metabolism; nitric oxide reduction. In terms of biological role, one of at least two accessory proteins for anaerobic nitric oxide (NO) reductase. Reduces the rubredoxin moiety of NO reductase. The chain is Nitric oxide reductase FlRd-NAD(+) reductase from Escherichia coli O127:H6 (strain E2348/69 / EPEC).